Here is an 89-residue protein sequence, read N- to C-terminus: Small ribosomal subunit protein uS15 (89 aa).

This sequence belongs to the universal ribosomal protein uS15 family. In terms of assembly, part of the 30S ribosomal subunit. Forms a bridge to the 50S subunit in the 70S ribosome, contacting the 23S rRNA.

Its function is as follows. One of the primary rRNA binding proteins, it binds directly to 16S rRNA where it helps nucleate assembly of the platform of the 30S subunit by binding and bridging several RNA helices of the 16S rRNA. Forms an intersubunit bridge (bridge B4) with the 23S rRNA of the 50S subunit in the ribosome. This chain is Small ribosomal subunit protein uS15, found in Latilactobacillus sakei subsp. sakei (strain 23K) (Lactobacillus sakei subsp. sakei).